The chain runs to 1768 residues: Maestro heat-like repeat-containing protein family member 1 homolog (1768 aa).

6 HEAT repeats span residues 4 to 47 (TSQV…HQPN), 164 to 203 (VHNPFGLVPFLTDILSRTVPLLQHVKTDPLRCAWARAICS), 816 to 856 (QRLQ…AVHP), 1166 to 1204 (QSQMQIYLSAIFEMLTDRQSHVSSAAAQLLTYAVMARGA), 1483 to 1521 (EQLLVKCIRRLEDSLTDPSLRIRKLCVKGLGELSECSST), and 1731 to 1768 (TISRELVFTGLVALLKDSEDVNVRISATRAIANLHDFH).

It belongs to the MROH1 family. In terms of assembly, homooligomer; homooligomerizes at lysosome scission sites.

The protein resides in the lysosome membrane. In terms of biological role, lysosome fission factor. Recruited to lysosomes by rab-7 at scission sites and homooligomerizes to mediate the constriction and scission of lysosomal tubules. May sever membranes by inserting amphipathic helices into one bilayer leaflet. Lysosome fission is required to maintain their steady-state number, shape, size, composition and function, and to accomplish regeneration. This is Maestro heat-like repeat-containing protein family member 1 homolog from Caenorhabditis elegans.